A 130-amino-acid polypeptide reads, in one-letter code: Small ribosomal subunit protein uS11 (130 aa).

This sequence belongs to the universal ribosomal protein uS11 family. In terms of assembly, part of the 30S ribosomal subunit. Interacts with proteins S7 and S18. Binds to IF-3.

Functionally, located on the platform of the 30S subunit, it bridges several disparate RNA helices of the 16S rRNA. Forms part of the Shine-Dalgarno cleft in the 70S ribosome. The protein is Small ribosomal subunit protein uS11 of Syntrophobacter fumaroxidans (strain DSM 10017 / MPOB).